The primary structure comprises 417 residues: Gamma-glutamyl phosphate reductase (417 aa).

It belongs to the gamma-glutamyl phosphate reductase family.

It is found in the cytoplasm. The enzyme catalyses L-glutamate 5-semialdehyde + phosphate + NADP(+) = L-glutamyl 5-phosphate + NADPH + H(+). It participates in amino-acid biosynthesis; L-proline biosynthesis; L-glutamate 5-semialdehyde from L-glutamate: step 2/2. Functionally, catalyzes the NADPH-dependent reduction of L-glutamate 5-phosphate into L-glutamate 5-semialdehyde and phosphate. The product spontaneously undergoes cyclization to form 1-pyrroline-5-carboxylate. The protein is Gamma-glutamyl phosphate reductase of Bacteroides thetaiotaomicron (strain ATCC 29148 / DSM 2079 / JCM 5827 / CCUG 10774 / NCTC 10582 / VPI-5482 / E50).